Here is a 131-residue protein sequence, read N- to C-terminus: D-ribose pyranase (131 aa).

The Proton donor role is filled by histidine 20. Residues aspartate 28, histidine 98, and 120–122 each bind substrate; that span reads YSN.

Belongs to the RbsD / FucU family. RbsD subfamily. Homodecamer.

The protein resides in the cytoplasm. The catalysed reaction is beta-D-ribopyranose = beta-D-ribofuranose. The protein operates within carbohydrate metabolism; D-ribose degradation; D-ribose 5-phosphate from beta-D-ribopyranose: step 1/2. In terms of biological role, catalyzes the interconversion of beta-pyran and beta-furan forms of D-ribose. The polypeptide is D-ribose pyranase (Limosilactobacillus fermentum (strain NBRC 3956 / LMG 18251) (Lactobacillus fermentum)).